A 662-amino-acid chain; its full sequence is Neurexin-2-beta (662 aa).

The span at 1-10 shows a compositional bias: gly residues; the sequence is MPPGGSGQGG. Positions 1–27 are disordered; that stretch reads MPPGGSGQGGCPRRPPALAGPLPPPPP. A signal peptide spans 1 to 46; the sequence is MPPGGSGQGGCPRRPPALAGPLPPPPPPPPLPLLLGLLLLLGAAEG. Residues 47–586 lie on the Extracellular side of the membrane; it reads ARVSSSLSTT…EVIRESSSTT (540 aa). The Laminin G-like domain maps to 87-295; it reads TTYIFGKGGA…HLRLVGEGPS (209 aa). The Ca(2+) site is built by Asp-139 and Val-156. A glycan (N-linked (GlcNAc...) asparagine) is linked at Asn-186. Residues Ile-238 and Asn-240 each coordinate Ca(2+). The O-linked (Xyl...) (heparan sulfate) serine glycan is linked to Ser-350. Disordered regions lie at residues 408 to 458, 476 to 496, and 530 to 557; these read ATQD…LPPT, LLSP…ATGA, and LGPG…PGFP. The helical transmembrane segment at 587–607 threads the bilayer; sequence GMVVGIVAAAALCILILLYAM. Topologically, residues 608–662 are cytoplasmic; it reads YKYRNRDEGSYQVDQSRNYISNSAQSNGAVVKEKAPAAPKTPSKAKKNKDKEYYV. The segment at 629-662 is disordered; sequence NSAQSNGAVVKEKAPAAPKTPSKAKKNKDKEYYV.

It belongs to the neurexin family. In terms of assembly, interacts (via cytoplasmic C-terminal region) with CASK. Isoform Beta 4b binds alpha-dystroglycan and neuroligins NLGN1, NLGN2 and NLGN3. Interacts with CBLN1, CBLN2 and, less avidly, with CBLN4. Interacts with CLSTN3. Post-translationally, O-glycosylated; contains heparan sulfate. Heparan sulfate attachment is required for synapse development by mediating interactions with neuroligins. As to expression, brain (neuronal synapse).

The protein localises to the presynaptic cell membrane. Neuronal cell surface protein that may be involved in cell recognition and cell adhesion. In Rattus norvegicus (Rat), this protein is Neurexin-2-beta (Nrxn2).